We begin with the raw amino-acid sequence, 56 residues long: Potassium channel toxin alpha-KTx 9.8 (56 aa).

Positions 1 to 19 (MSRLFTLVLIVLAMNVMMA) are cleaved as a signal peptide. Positions 20-28 (IISDPVVEA) are excised as a propeptide. 3 cysteine pairs are disulfide-bonded: Cys-31–Cys-47, Cys-34–Cys-52, and Cys-38–Cys-54.

The protein belongs to the short scorpion toxin superfamily. Potassium channel inhibitor family. Alpha-KTx 09 subfamily. In terms of tissue distribution, expressed by the venom gland.

It localises to the secreted. In terms of biological role, potassium channel inhibitor. In Buthus israelis (Israeli scorpion), this protein is Potassium channel toxin alpha-KTx 9.8.